Consider the following 400-residue polypeptide: Phosphoglycerate kinase (400 aa).

Residues 22–24 (DFN), arginine 38, 61–64 (HLGR), arginine 119, and arginine 152 each bind substrate. Residues lysine 205, glycine 296, glutamate 327, and 353–356 (GGDT) contribute to the ATP site.

This sequence belongs to the phosphoglycerate kinase family. As to quaternary structure, monomer.

The protein resides in the cytoplasm. The enzyme catalyses (2R)-3-phosphoglycerate + ATP = (2R)-3-phospho-glyceroyl phosphate + ADP. It participates in carbohydrate degradation; glycolysis; pyruvate from D-glyceraldehyde 3-phosphate: step 2/5. In Campylobacter jejuni subsp. jejuni serotype O:23/36 (strain 81-176), this protein is Phosphoglycerate kinase.